We begin with the raw amino-acid sequence, 554 residues long: Glucose-6-phosphate isomerase 1 (554 aa).

The active-site Proton donor is the Glu-359. Active-site residues include His-390 and Lys-518.

This sequence belongs to the GPI family.

The protein localises to the cytoplasm. It carries out the reaction alpha-D-glucose 6-phosphate = beta-D-fructose 6-phosphate. It functions in the pathway carbohydrate biosynthesis; gluconeogenesis. Its pathway is carbohydrate degradation; glycolysis; D-glyceraldehyde 3-phosphate and glycerone phosphate from D-glucose: step 2/4. Catalyzes the reversible isomerization of glucose-6-phosphate to fructose-6-phosphate. This Pseudomonas putida (strain ATCC 47054 / DSM 6125 / CFBP 8728 / NCIMB 11950 / KT2440) protein is Glucose-6-phosphate isomerase 1.